The primary structure comprises 294 residues: Cytidine deaminase (294 aa).

CMP/dCMP-type deaminase domains lie at 48–168 and 186–294; these read DEDA…FGPK and LTGD…VLLG. Residue 89–91 participates in substrate binding; it reads NME. His-102 is a Zn(2+) binding site. Glu-104 (proton donor) is an active-site residue. The Zn(2+) site is built by Cys-129 and Cys-132.

It belongs to the cytidine and deoxycytidylate deaminase family. In terms of assembly, homodimer. Requires Zn(2+) as cofactor.

It catalyses the reaction cytidine + H2O + H(+) = uridine + NH4(+). The catalysed reaction is 2'-deoxycytidine + H2O + H(+) = 2'-deoxyuridine + NH4(+). In terms of biological role, this enzyme scavenges exogenous and endogenous cytidine and 2'-deoxycytidine for UMP synthesis. This Salmonella agona (strain SL483) protein is Cytidine deaminase.